The following is an 862-amino-acid chain: Protein translocase subunit SecA (862 aa).

Residues Gln86, 104-108 (GEGKT), and Asp499 each bind ATP. Zn(2+) is bound by residues Cys848, Cys850, Cys859, and His860.

Belongs to the SecA family. In terms of assembly, monomer and homodimer. Part of the essential Sec protein translocation apparatus which comprises SecA, SecYEG and auxiliary proteins SecDF-YajC and YidC. Zn(2+) serves as cofactor.

Its subcellular location is the cell inner membrane. It is found in the cytoplasm. It catalyses the reaction ATP + H2O + cellular proteinSide 1 = ADP + phosphate + cellular proteinSide 2.. Part of the Sec protein translocase complex. Interacts with the SecYEG preprotein conducting channel. Has a central role in coupling the hydrolysis of ATP to the transfer of proteins into and across the cell membrane, serving both as a receptor for the preprotein-SecB complex and as an ATP-driven molecular motor driving the stepwise translocation of polypeptide chains across the membrane. The polypeptide is Protein translocase subunit SecA (Ehrlichia canis (strain Jake)).